A 978-amino-acid chain; its full sequence is Rab3 GTPase-activating protein catalytic subunit (978 aa).

3 disordered regions span residues 533 to 554 (EGKK…TASD), 586 to 621 (HSDT…RLHQ), and 908 to 936 (EEEP…GREL). Residues 540-554 (LYSSSESSVNKTASD) are compositionally biased toward polar residues. 2 stretches are compositionally biased toward basic and acidic residues: residues 586–619 (HSDT…EGRL) and 909–922 (EEPK…DRRQ).

It belongs to the Rab3-GAP catalytic subunit family. As to quaternary structure, the Rab3 GTPase-activating complex is a heterodimer composed of rab3gap1 and rab3gap2. The Rab3 GTPase-activating complex interacts with DMXL2. Interacts with LMAN1.

It is found in the cytoplasm. The protein resides in the endoplasmic reticulum. It localises to the golgi apparatus. Its subcellular location is the cis-Golgi network. Functionally, catalytic subunit of the Rab3 GTPase-activating (Rab3GAP) complex composed of rab3gap1 and rab3gap2, which has GTPase-activating protein (GAP) activity towards various Rab3 subfamily members (RAB3A, RAB3B, RAB3C and RAB3D), RAB5A and RAB43, and guanine nucleotide exchange factor (GEF) activity towards RAB18. As part of the Rab3GAP complex, acts as a GAP for Rab3 proteins by converting active RAB3-GTP to the inactive form RAB3-GDP. Rab3 proteins are involved in regulated exocytosis of neurotransmitters and hormones. The Rab3GAP complex, acts as a GEF for RAB18 by promoting the conversion of inactive RAB18-GDP to the active form RAB18-GTP. Recruits and stabilizes RAB18 at the cis-Golgi membrane where RAB18 is most likely activated. Also involved in RAB18 recruitment at the endoplasmic reticulum (ER) membrane where it maintains proper ER structure. Required for normal eye and brain development. May participate in neurodevelopmental processes such as proliferation, migration and differentiation before synapse formation, and non-synaptic vesicular release of neurotransmitters. The polypeptide is Rab3 GTPase-activating protein catalytic subunit (rab3gap1) (Xenopus laevis (African clawed frog)).